We begin with the raw amino-acid sequence, 488 residues long: GTPase Der (488 aa).

EngA-type G domains lie at 3–166 (PVVA…AEAM) and 199–372 (IKLA…DSAT). GTP-binding positions include 9–16 (GRPNVGKS), 56–60 (DTGGI), 118–121 (NKVD), 205–212 (GKPNVGKS), 252–256 (DTAGV), and 317–320 (NKWD). The 85-residue stretch at 373–457 (RRVSTSMLTR…PIQLRFQEGD (85 aa)) folds into the KH-like domain. Residues 460–488 (FENKTEKLTMSQERRRKRAQSHIKDRKTK) form a disordered region. The segment covering 473-488 (RRRKRAQSHIKDRKTK) has biased composition (basic residues).

Belongs to the TRAFAC class TrmE-Era-EngA-EngB-Septin-like GTPase superfamily. EngA (Der) GTPase family. In terms of assembly, associates with the 50S ribosomal subunit.

Functionally, GTPase that plays an essential role in the late steps of ribosome biogenesis. The protein is GTPase Der of Shewanella baltica (strain OS155 / ATCC BAA-1091).